The sequence spans 432 residues: Ribosomal protein uS12 methylthiotransferase RimO (432 aa).

The MTTase N-terminal domain occupies 4-122 (NTIDIITLGC…LLADLGKAYK (119 aa)). Positions 13, 51, 85, 146, 150, and 153 each coordinate [4Fe-4S] cluster. The Radical SAM core domain occupies 132-363 (TTPHHYAYLK…MALQQEIAGE (232 aa)). In terms of domain architecture, TRAM spans 366–432 (QTKIGKEFKV…DDFDLYASIL (67 aa)).

Belongs to the methylthiotransferase family. RimO subfamily. It depends on [4Fe-4S] cluster as a cofactor.

Its subcellular location is the cytoplasm. The enzyme catalyses L-aspartate(89)-[ribosomal protein uS12]-hydrogen + (sulfur carrier)-SH + AH2 + 2 S-adenosyl-L-methionine = 3-methylsulfanyl-L-aspartate(89)-[ribosomal protein uS12]-hydrogen + (sulfur carrier)-H + 5'-deoxyadenosine + L-methionine + A + S-adenosyl-L-homocysteine + 2 H(+). Functionally, catalyzes the methylthiolation of an aspartic acid residue of ribosomal protein uS12. This Phocaeicola vulgatus (strain ATCC 8482 / DSM 1447 / JCM 5826 / CCUG 4940 / NBRC 14291 / NCTC 11154) (Bacteroides vulgatus) protein is Ribosomal protein uS12 methylthiotransferase RimO.